The primary structure comprises 266 residues: 3-methyl-2-oxobutanoate hydroxymethyltransferase 2 (266 aa).

Mg(2+) is bound by residues D45 and D84. 3-methyl-2-oxobutanoate is bound by residues 45-46 (DS), D84, and K112. E114 contributes to the Mg(2+) binding site. E181 functions as the Proton acceptor in the catalytic mechanism.

It belongs to the PanB family. As to quaternary structure, homodecamer; pentamer of dimers. Mg(2+) is required as a cofactor.

It is found in the cytoplasm. The catalysed reaction is 3-methyl-2-oxobutanoate + (6R)-5,10-methylene-5,6,7,8-tetrahydrofolate + H2O = 2-dehydropantoate + (6S)-5,6,7,8-tetrahydrofolate. It participates in cofactor biosynthesis; (R)-pantothenate biosynthesis; (R)-pantoate from 3-methyl-2-oxobutanoate: step 1/2. Functionally, catalyzes the reversible reaction in which hydroxymethyl group from 5,10-methylenetetrahydrofolate is transferred onto alpha-ketoisovalerate to form ketopantoate. This chain is 3-methyl-2-oxobutanoate hydroxymethyltransferase 2, found in Pseudomonas aeruginosa (strain ATCC 15692 / DSM 22644 / CIP 104116 / JCM 14847 / LMG 12228 / 1C / PRS 101 / PAO1).